The following is a 73-amino-acid chain: Small, acid-soluble spore protein C5 (73 aa).

It belongs to the alpha/beta-type SASP family.

In terms of biological role, SASP are bound to spore DNA. They are double-stranded DNA-binding proteins that cause DNA to change to an a-like conformation. They protect the DNA backbone from chemical and enzymatic cleavage and are thus involved in dormant spore's high resistance to UV light. This chain is Small, acid-soluble spore protein C5 (SASP-C5), found in Priestia megaterium (Bacillus megaterium).